Consider the following 79-residue polypeptide: Sec-independent protein translocase protein TatA (79 aa).

Residues M1–G21 traverse the membrane as a helical segment. Over residues M43 to D60 the composition is skewed to basic and acidic residues. The segment at M43–V79 is disordered.

This sequence belongs to the TatA/E family. In terms of assembly, the Tat system comprises two distinct complexes: a TatABC complex, containing multiple copies of TatA, TatB and TatC subunits, and a separate TatA complex, containing only TatA subunits. Substrates initially bind to the TatABC complex, which probably triggers association of the separate TatA complex to form the active translocon.

It is found in the cell inner membrane. Its function is as follows. Part of the twin-arginine translocation (Tat) system that transports large folded proteins containing a characteristic twin-arginine motif in their signal peptide across membranes. TatA could form the protein-conducting channel of the Tat system. This is Sec-independent protein translocase protein TatA from Nitrobacter hamburgensis (strain DSM 10229 / NCIMB 13809 / X14).